Here is a 322-residue protein sequence, read N- to C-terminus: Hydrolase C26A3.11 (322 aa).

The CN hydrolase domain occupies 44–290 (FRIGLVQLAN…PSIVYADIDP (247 aa)). Glu-83 serves as the catalytic Proton acceptor. The active-site Proton donor is Lys-154. Catalysis depends on Cys-195, which acts as the Nucleophile.

Belongs to the carbon-nitrogen hydrolase superfamily. NIT1/NIT2 family.

The chain is Hydrolase C26A3.11 from Schizosaccharomyces pombe (strain 972 / ATCC 24843) (Fission yeast).